The sequence spans 226 residues: UPF0758 protein LL1007 (226 aa).

Residues 103–225 form the MPN domain; the sequence is QVLSSREYGL…YFSFREEEIR (123 aa). Residues histidine 174, histidine 176, and aspartate 187 each contribute to the Zn(2+) site. A JAMM motif motif is present at residues 174–187; sequence HNHPSGNLKPSQAD.

The protein belongs to the UPF0758 family.

The polypeptide is UPF0758 protein LL1007 (Lactococcus lactis subsp. lactis (strain IL1403) (Streptococcus lactis)).